The chain runs to 497 residues: Glycerol kinase (497 aa).

Thr13 lines the ADP pocket. ATP is bound by residues Thr13, Thr14, and Ser15. Thr13 provides a ligand contact to sn-glycerol 3-phosphate. Arg17 contacts ADP. The sn-glycerol 3-phosphate site is built by Arg83, Glu84, and Tyr135. Positions 83, 84, and 135 each coordinate glycerol. His231 carries the phosphohistidine; by HPr modification. Asp245 provides a ligand contact to sn-glycerol 3-phosphate. The glycerol site is built by Asp245 and Gln246. Thr267 and Gly310 together coordinate ADP. ATP contacts are provided by Thr267, Gly310, Gln314, and Gly411. The ADP site is built by Gly411 and Asn415.

The protein belongs to the FGGY kinase family. In terms of assembly, homotetramer and homodimer (in equilibrium). The phosphoenolpyruvate-dependent sugar phosphotransferase system (PTS), including enzyme I, and histidine-containing protein (HPr) are required for the phosphorylation, which leads to the activation of the enzyme.

It catalyses the reaction glycerol + ATP = sn-glycerol 3-phosphate + ADP + H(+). It participates in polyol metabolism; glycerol degradation via glycerol kinase pathway; sn-glycerol 3-phosphate from glycerol: step 1/1. Its activity is regulated as follows. Activated by phosphorylation and inhibited by fructose 1,6-bisphosphate (FBP). Its function is as follows. Key enzyme in the regulation of glycerol uptake and metabolism. Catalyzes the phosphorylation of glycerol to yield sn-glycerol 3-phosphate. This is Glycerol kinase from Halalkalibacterium halodurans (strain ATCC BAA-125 / DSM 18197 / FERM 7344 / JCM 9153 / C-125) (Bacillus halodurans).